A 253-amino-acid chain; its full sequence is Mediator of RNA polymerase II transcription subunit 10 (253 aa).

Disordered stretches follow at residues 32 to 63, 88 to 109, and 206 to 253; these read YDTNPSSSNNNTPTSSRASGGGGGGGGGHASS, LPSSPSSGPSNNQPQQGTTELE, and VEAT…QSGQ. Over residues 34-47 the composition is skewed to low complexity; the sequence is TNPSSSNNNTPTSS. Gly residues predominate over residues 50–60; sequence SGGGGGGGGGH. Low complexity predominate over residues 88–104; the sequence is LPSSPSSGPSNNQPQQG. A compositionally biased stretch (gly residues) spans 231 to 253; it reads SAGGEGQQGQGQGQQGQGQQSGQ.

Belongs to the Mediator complex subunit 10 family. In terms of assembly, component of the Mediator complex.

Its subcellular location is the nucleus. Component of the Mediator complex, a coactivator involved in the regulated transcription of nearly all RNA polymerase II-dependent genes. Mediator functions as a bridge to convey information from gene-specific regulatory proteins to the basal RNA polymerase II transcription machinery. Mediator is recruited to promoters by direct interactions with regulatory proteins and serves as a scaffold for the assembly of a functional preinitiation complex with RNA polymerase II and the general transcription factors. In Neurospora crassa (strain ATCC 24698 / 74-OR23-1A / CBS 708.71 / DSM 1257 / FGSC 987), this protein is Mediator of RNA polymerase II transcription subunit 10 (nut2).